Reading from the N-terminus, the 651-residue chain is Protein EXECUTER 2, chloroplastic (651 aa).

Residues M1 to N69 constitute a chloroplast transit peptide. The UVR domain occupies E103 to D138. A disordered region spans residues D330–S359.

The protein resides in the plastid. The protein localises to the chloroplast. Its function is as follows. Together with EX1, enables higher plants to perceive singlet oxygen as a stress signal in plastid that activates a genetically determined nuclear stress response program which triggers a programmed cell death (PCD). This transfer of singlet oxygen-induced stress-related signals from the plastid to the nucleus that triggers genetically controlled PCD pathway is unique to photosynthetic eukaryotes and operates under mild stress conditions, impeding photosystem II (PSII) without causing photooxidative damage of the plant. In Arabidopsis thaliana (Mouse-ear cress), this protein is Protein EXECUTER 2, chloroplastic.